Here is a 541-residue protein sequence, read N- to C-terminus: Arginine-containing cyclodipeptide synthase avaA (541 aa).

The Conserved DDXXE motif motif lies at 428-432 (DDIAE).

Belongs to the arginine-containing cyclodipeptide synthase family.

The catalysed reaction is L-tryptophyl-tRNA(Trp) + L-arginyl-tRNA(Arg) = cyclo(L-arginyl-L-tryptophyl) + tRNA(Trp) + tRNA(Arg) + H(+). Its pathway is secondary metabolite biosynthesis. Functionally, arginine-containing cyclodipeptide synthase; part of the cluster that mediates the biosynthesis of a highly modified cyclo-arginine-tryptophan dipeptide (cRW). Within the pathway, avaA acts as the scaffold-generating enzyme and is responsible for formation of the cyclo-Arg-Trp diketopiperazine (cRW) from L-arginyl-tRNA(Arg) + L-tryptophanyl-tRNA(Trp). AvaB then acts as a multifunctional flavoenzyme that is responsible for generating the cyclo-Arg-formylkynurenine DKP, which can be deformylated by avaC. AvaB then catalyzes an additional N-oxidation followed by cyclization and dehydration. The next step is an N-acetylation of the guanidine group catalyzed by the arginine N-acetyltransferase AvaD. The role of the additional enzymes identified within the ava cluster still have to be determined. The protein is Arginine-containing cyclodipeptide synthase avaA of Aspergillus versicolor.